Consider the following 888-residue polypeptide: Inactive deaminase YJL070C (888 aa).

Positions 1-42 (MQAVERRPSLLFDEYQNSVTKPNETKNKEARVLSENDGDVSP) are disordered. A Phosphoserine modification is found at Ser-9. Basic and acidic residues predominate over residues 23 to 34 (NETKNKEARVLS). Residues Ser-41, Ser-178, and Ser-180 each carry the phosphoserine modification.

This sequence belongs to the metallo-dependent hydrolases superfamily. Adenosine and AMP deaminases family.

The chain is Inactive deaminase YJL070C from Saccharomyces cerevisiae (strain ATCC 204508 / S288c) (Baker's yeast).